A 471-amino-acid chain; its full sequence is Ribulose bisphosphate carboxylase large chain (471 aa).

Substrate-binding residues include N115 and T165. The active-site Proton acceptor is K167. Residue K169 coordinates substrate. 3 residues coordinate Mg(2+): K193, D195, and E196. K193 is subject to N6-carboxylysine. H286 acts as the Proton acceptor in catalysis. 3 residues coordinate substrate: R287, H319, and S371.

Belongs to the RuBisCO large chain family. Type I subfamily. As to quaternary structure, heterohexadecamer of 8 large chains and 8 small chains. Forms a CsoS2-CsoS1-RuBisCO complex. Requires Mg(2+) as cofactor.

The protein localises to the carboxysome. The enzyme catalyses 2 (2R)-3-phosphoglycerate + 2 H(+) = D-ribulose 1,5-bisphosphate + CO2 + H2O. It catalyses the reaction D-ribulose 1,5-bisphosphate + O2 = 2-phosphoglycolate + (2R)-3-phosphoglycerate + 2 H(+). In terms of biological role, ruBisCO catalyzes two reactions: the carboxylation of D-ribulose 1,5-bisphosphate, the primary event in carbon dioxide fixation, as well as the oxidative fragmentation of the pentose substrate in the photorespiration process. Both reactions occur simultaneously and in competition at the same active site. The polypeptide is Ribulose bisphosphate carboxylase large chain (Parasynechococcus marenigrum (strain WH8102)).